The sequence spans 313 residues: Fe-S cluster assembly protein dre2 (313 aa).

2 disordered regions span residues 1–25 and 151–187; these read MSITIDTSVDIDLPTPPQSNGSQKR and GRKKKDKTNGVNGVQNGVATNGASTNGVGMFDPAQNN. Residues 20–145 are N-terminal SAM-like domain; sequence NGSQKRNLLL…FEKPVQEAAV (126 aa). The interval 146-203 is linker; sequence PLKLGGRKKKDKTNGVNGVQNGVATNGASTNGVGMFDPAQNNDDELIDEDALLSDDDL. Positions 159–177 are enriched in polar residues; sequence NGVNGVQNGVATNGASTNG. Positions 213, 225, 228, and 230 each coordinate [2Fe-2S] cluster. The interval 213 to 230 is fe-S binding site A; sequence CVPETAKKRRRPCKDCTC. [4Fe-4S] cluster contacts are provided by cysteine 276, cysteine 279, cysteine 287, and cysteine 290. 2 short sequence motifs (cx2C motif) span residues 276 to 279 and 287 to 290; these read CNSC and CSSC. The interval 276–290 is fe-S binding site B; that stretch reads CNSCSLGDAFRCSSC.

Belongs to the anamorsin family. In terms of assembly, monomer. Interacts with tah18. Interacts with mia40. Requires [2Fe-2S] cluster as cofactor. [4Fe-4S] cluster is required as a cofactor.

It localises to the cytoplasm. Its subcellular location is the mitochondrion intermembrane space. Functionally, component of the cytosolic iron-sulfur (Fe-S) protein assembly (CIA) machinery required for the maturation of extramitochondrial Fe-S proteins. Part of an electron transfer chain functioning in an early step of cytosolic Fe-S biogenesis, facilitating the de novo assembly of a [4Fe-4S] cluster on the scaffold complex cfd1-nbp35. Electrons are transferred to dre2 from NADPH via the FAD- and FMN-containing protein tah18. Tah18-dre2 are also required for the assembly of the diferric tyrosyl radical cofactor of ribonucleotide reductase (RNR), probably by providing electrons for reduction during radical cofactor maturation in the catalytic small subunit rnr2. The chain is Fe-S cluster assembly protein dre2 from Aspergillus oryzae (strain ATCC 42149 / RIB 40) (Yellow koji mold).